The following is a 209-amino-acid chain: UPF0319 protein VFMJ11_1730 (209 aa).

Residues 1-21 (MKIQSIFAASFCLLSSISAHA) form the signal peptide.

It belongs to the UPF0319 family.

This chain is UPF0319 protein VFMJ11_1730, found in Aliivibrio fischeri (strain MJ11) (Vibrio fischeri).